The primary structure comprises 589 residues: Aspartate--tRNA ligase (589 aa).

Glutamate 175 contributes to the L-aspartate binding site. An aspartate region spans residues 199–202 (QLFK). Arginine 221 is a binding site for L-aspartate. ATP contacts are provided by residues 221-223 (RDE) and glutamine 230. Histidine 449 contacts L-aspartate. Glutamate 483 provides a ligand contact to ATP. Arginine 490 provides a ligand contact to L-aspartate. 535 to 538 (GLDR) contacts ATP.

Belongs to the class-II aminoacyl-tRNA synthetase family. Type 1 subfamily. In terms of assembly, homodimer.

It is found in the cytoplasm. It catalyses the reaction tRNA(Asp) + L-aspartate + ATP = L-aspartyl-tRNA(Asp) + AMP + diphosphate. In terms of biological role, catalyzes the attachment of L-aspartate to tRNA(Asp) in a two-step reaction: L-aspartate is first activated by ATP to form Asp-AMP and then transferred to the acceptor end of tRNA(Asp). The chain is Aspartate--tRNA ligase from Lysinibacillus sphaericus (strain C3-41).